Consider the following 205-residue polypeptide: Peptidyl-prolyl cis-trans isomerase B (205 aa).

The signal sequence occupies residues 1–20 (MKFSGLWCWLLLFLSVNVIA). Residues 39-198 (FFDIEHGEEK…EAVKIAKCGE (160 aa)) form the PPIase cyclophilin-type domain.

This sequence belongs to the cyclophilin-type PPIase family. PPIase B subfamily.

It localises to the secreted. The catalysed reaction is [protein]-peptidylproline (omega=180) = [protein]-peptidylproline (omega=0). With respect to regulation, cyclosporin A (CsA) inhibits CYPB. In terms of biological role, PPIases accelerate the folding of proteins. It catalyzes the cis-trans isomerization of proline imidic peptide bonds in oligopeptides. This chain is Peptidyl-prolyl cis-trans isomerase B (CPR2), found in Saccharomyces cerevisiae (strain ATCC 204508 / S288c) (Baker's yeast).